A 1142-amino-acid chain; its full sequence is Enamelin (1142 aa).

Positions 1–39 are cleaved as a signal peptide; sequence MLVLRCRLGTSFPKLDNLVPKGKMKILLVFLGLLGNSVA. 6 disordered regions span residues 88-193, 214-326, 398-671, 874-955, 1020-1048, and 1062-1092; these read QYQM…ISNE, YYSE…PNIR, PANL…QNRW, CCAG…LRRN, VIGT…QQQR, and LAKH…PTEN. Positions 103–114 are enriched in basic residues; the sequence is HPRKSSAPKRHN. N-linked (GlcNAc...) asparagine glycosylation is found at Asn114 and Asn126. Residues 117-128 are compositionally biased toward polar residues; it reads DQTQETQKPNQT. Residues 140 to 162 are compositionally biased toward low complexity; that stretch reads KQPSHNQPQPEEEAQPPQAFPPF. Over residues 170–186 the composition is skewed to pro residues; the sequence is QQPPWQIPQRLPPPGYG. Phosphoserine occurs at positions 191 and 216. Residues 223–234 are compositionally biased toward basic and acidic residues; the sequence is DFEKPKEEDPPK. The span at 240 to 285 shows a compositional bias: polar residues; the sequence is TEPTANSTVTETNSTQPNPKGSQGGNDTSPTGNSTPGLNTGNNPPA. Residues Asn245, Asn252, Asn265, and Asn296 are each glycosylated (N-linked (GlcNAc...) asparagine). Positions 429–442 are enriched in basic and acidic residues; that stretch reads RNEKIQNPKEKPLG. 3 stretches are compositionally biased toward polar residues: residues 452–470, 507–516, and 531–544; these read KNPT…NKSN, SDGQTQSQNL, and SETN…SSYQ. N-linked (GlcNAc...) asparagine glycosylation occurs at Asn467. Asn534 carries an N-linked (GlcNAc...) asparagine glycan. Residues 556–588 show a composition bias toward basic and acidic residues; sequence AKEHFPAGRNTWDHQEISPPFKEDPGRQEEHLP. A compositionally biased stretch (acidic residues) spans 652-661; it reads NEEDPVDPTG. Residues 924 to 934 are compositionally biased toward polar residues; sequence SPTSILPGQRN. N-linked (GlcNAc...) asparagine glycosylation is present at Asn934. The span at 935-951 shows a compositional bias: basic and acidic residues; that stretch reads SSEKRESQNPFRDDVST. Asn1040 carries N-linked (GlcNAc...) asparagine glycosylation. A compositionally biased stretch (polar residues) spans 1068 to 1078; the sequence is STTGTPSSDGR.

Post-translationally, phosphorylated by FAM20C in vitro. Expressed in tooth particularly in odontoblast, ameloblast and cementoblast.

The protein localises to the secreted. It is found in the extracellular space. It localises to the extracellular matrix. Involved in the mineralization and structural organization of enamel. Involved in the extension of enamel during the secretory stage of dental enamel formation. This chain is Enamelin (ENAM), found in Homo sapiens (Human).